Reading from the N-terminus, the 302-residue chain is Sulfate adenylyltransferase subunit 2 2 (302 aa).

The protein belongs to the PAPS reductase family. CysD subfamily. As to quaternary structure, heterodimer composed of CysD, the smaller subunit, and CysN.

It catalyses the reaction sulfate + ATP + H(+) = adenosine 5'-phosphosulfate + diphosphate. Its pathway is sulfur metabolism; hydrogen sulfide biosynthesis; sulfite from sulfate: step 1/3. With CysN forms the ATP sulfurylase (ATPS) that catalyzes the adenylation of sulfate producing adenosine 5'-phosphosulfate (APS) and diphosphate, the first enzymatic step in sulfur assimilation pathway. APS synthesis involves the formation of a high-energy phosphoric-sulfuric acid anhydride bond driven by GTP hydrolysis by CysN coupled to ATP hydrolysis by CysD. This is Sulfate adenylyltransferase subunit 2 2 from Alkalilimnicola ehrlichii (strain ATCC BAA-1101 / DSM 17681 / MLHE-1).